A 223-amino-acid polypeptide reads, in one-letter code: Phosphoribosylformylglycinamidine synthase subunit PurQ (223 aa).

Residues 3 to 223 form the Glutamine amidotransferase type-1 domain; the sequence is FAVLVFPGSN…MVKSWREQHV (221 aa). C85 (nucleophile) is an active-site residue. Residues H193 and E195 contribute to the active site.

As to quaternary structure, part of the FGAM synthase complex composed of 1 PurL, 1 PurQ and 2 PurS subunits.

The protein resides in the cytoplasm. The enzyme catalyses N(2)-formyl-N(1)-(5-phospho-beta-D-ribosyl)glycinamide + L-glutamine + ATP + H2O = 2-formamido-N(1)-(5-O-phospho-beta-D-ribosyl)acetamidine + L-glutamate + ADP + phosphate + H(+). The catalysed reaction is L-glutamine + H2O = L-glutamate + NH4(+). It functions in the pathway purine metabolism; IMP biosynthesis via de novo pathway; 5-amino-1-(5-phospho-D-ribosyl)imidazole from N(2)-formyl-N(1)-(5-phospho-D-ribosyl)glycinamide: step 1/2. Part of the phosphoribosylformylglycinamidine synthase complex involved in the purines biosynthetic pathway. Catalyzes the ATP-dependent conversion of formylglycinamide ribonucleotide (FGAR) and glutamine to yield formylglycinamidine ribonucleotide (FGAM) and glutamate. The FGAM synthase complex is composed of three subunits. PurQ produces an ammonia molecule by converting glutamine to glutamate. PurL transfers the ammonia molecule to FGAR to form FGAM in an ATP-dependent manner. PurS interacts with PurQ and PurL and is thought to assist in the transfer of the ammonia molecule from PurQ to PurL. In Staphylococcus aureus (strain MRSA252), this protein is Phosphoribosylformylglycinamidine synthase subunit PurQ.